Here is a 445-residue protein sequence, read N- to C-terminus: Solute carrier family 52, riboflavin transporter, member 2 (445 aa).

Transmembrane regions (helical) follow at residues 14–34 (LLVA…WVEL), 47–67 (LPSY…VVTL), 86–106 (VLGM…APVA), 112–132 (VAFL…NVTF), 147–167 (FFLG…VQGV), and 196–216 (FFWA…GLLL). The tract at residues 228-264 (ELGSGLQVGAPGAEEEVEESSPLQEPPSQAAGTTPGP) is disordered. The span at 247 to 258 (SSPLQEPPSQAA) shows a compositional bias: low complexity. The next 5 membrane-spanning stretches (helical) occupy residues 277–297 (ACLL…LPAV), 312–332 (LAVV…MGVL), 339–359 (LGGL…LAVL), 366–386 (VGTS…LGVF), and 404–424 (ALLA…VAMF).

The protein belongs to the riboflavin transporter family. As to expression, highly expressed in brain, fetal brain and salivary gland. Weakly expressed in other tissues.

Its subcellular location is the cell membrane. The catalysed reaction is riboflavin(in) = riboflavin(out). With respect to regulation, riboflavin transport is Na(+)-independent but moderately pH-sensitive. Activity is strongly inhibited by riboflavin analogs, such as lumiflavin. Weakly inhibited by flavin adenine dinucleotide (FAD) and flavin mononucleotide (FMN). Its function is as follows. Plasma membrane transporter mediating the uptake by cells of the water soluble vitamin B2/riboflavin that plays a key role in biochemical oxidation-reduction reactions of the carbohydrate, lipid, and amino acid metabolism. Humans are unable to synthesize vitamin B2/riboflavin and must obtain it via intestinal absorption. May also act as a receptor for 4-hydroxybutyrate. Functionally, (Microbial infection) In case of infection by retroviruses, acts as a cell receptor to retroviral envelopes similar to the porcine endogenous retrovirus (PERV-A). The polypeptide is Solute carrier family 52, riboflavin transporter, member 2 (SLC52A2) (Homo sapiens (Human)).